The sequence spans 1690 residues: DNA-directed RNA polymerase subunit beta' (1690 aa).

Cys-63, Cys-65, Cys-78, and Cys-81 together coordinate Zn(2+). The Mg(2+) site is built by Asp-753, Asp-755, and Asp-757. Zn(2+) is bound by residues Cys-1107, Cys-1295, Cys-1302, and Cys-1305.

This sequence belongs to the RNA polymerase beta' chain family. The RNAP catalytic core consists of 2 alpha, 1 beta, 1 beta' and 1 omega subunit. When a sigma factor is associated with the core the holoenzyme is formed, which can initiate transcription. Mg(2+) is required as a cofactor. It depends on Zn(2+) as a cofactor.

The catalysed reaction is RNA(n) + a ribonucleoside 5'-triphosphate = RNA(n+1) + diphosphate. In terms of biological role, DNA-dependent RNA polymerase catalyzes the transcription of DNA into RNA using the four ribonucleoside triphosphates as substrates. The protein is DNA-directed RNA polymerase subunit beta' of Thermotoga sp. (strain RQ2).